Here is a 192-residue protein sequence, read N- to C-terminus: MVSKPRNEWSTALSHLVLAGVSLHAAVSSVQSSRGAAAGFLLQTLAAVIMLAPELNTHEDCLAGAWVATVIGLPLLAFDFHWVNGDRSSANLLLGGGMVLAVAGDHLGPEGCSVAGQAVLLVVAVTILIVAVFTANTYGMWGGAMLGVAGLLSRLEEDRLLLLPKEDVCRWALAAGSWAYCRALHTQRLQWE.

The N-terminal stretch at 1–32 is a signal peptide; that stretch reads MVSKPRNEWSTALSHLVLAGVSLHAAVSSVQS. A run of 4 helical transmembrane segments spans residues 35–55, 63–83, 92–112, and 114–134; these read GAAA…APEL, AGAW…FHWV, LLLG…PEGC, and VAGQ…AVFT.

It is found in the membrane. In Rattus norvegicus (Rat), this protein is Transmembrane protein 276.